Consider the following 425-residue polypeptide: Receptor-like protein 55 (425 aa).

A signal peptide spans 1 to 25 (MKPQQPQPPLLLLLLLPLLLTTVSS). The Extracellular segment spans residues 26-397 (YPLNPKQLKA…EEEHKGSNKT (372 aa)). Residues Asn40, Asn54, Asn79, and Asn132 are each glycosylated (N-linked (GlcNAc...) asparagine). LRR repeat units follow at residues 144–169 (LKNL…ILGN), 170–193 (MHKL…SFHS), 195–216 (LRYI…ITRL), 217–240 (KNLK…IKSL), 242–264 (FLKN…LSSI), 265–287 (SELT…FFSE), and 288–313 (MKNL…SFIK). N-linked (GlcNAc...) asparagine glycans are attached at residues Asn182, Asn202, Asn223, Asn245, Asn278, Asn308, and Asn329. Residues 355-389 (PSQKEESLSGENDYDVEGGNEEKTENLKTKEEEEE) are disordered. Residues 374–389 (NEEKTENLKTKEEEEE) are compositionally biased toward basic and acidic residues. A glycan (N-linked (GlcNAc...) asparagine) is linked at Asn395. Residues 398-418 (LFGLGIGLFSLVFLILFLFYL) traverse the membrane as a helical segment. Residues 419–425 (AKRCRLI) are Cytoplasmic-facing.

The protein belongs to the RLP family.

The protein resides in the cell membrane. In terms of biological role, involved in plant defense. In Arabidopsis thaliana (Mouse-ear cress), this protein is Receptor-like protein 55.